An 807-amino-acid chain; its full sequence is Shutoff protein (807 aa).

Positions 1-88 (MESVEKKDSL…QVGRGDERHG (88 aa)) are disordered. A compositionally biased stretch (polar residues) spans 16–29 (FATTASTDAANAPT). Basic and acidic residues-rich tracts occupy residues 59-70 (RSVPTEDKKQDQ) and 79-88 (QVGRGDERHG). The interval 280 to 345 (VMSELIVRRA…AVLVTVELEC (66 aa)) is binding to host EIF4G. One can recognise an RRM domain in the interval 348–466 (RFFADPEMQR…DLWTAFNERS (119 aa)). Phosphotyrosine; by host occurs at positions 365 and 682. The disordered stretch occupies residues 684 to 807 (DPQSGEELNP…AGTARSPTQP (124 aa)). Over residues 726 to 743 (GRGGILGQSGRGGFGRGG) the composition is skewed to gly residues. Positions 744–755 (GGHDGRLGEPRR) are enriched in basic and acidic residues. Basic residues predominate over residues 756 to 765 (GSFRGRRGVR).

This sequence belongs to the adenoviridae shutoff protein family. In terms of assembly, monomer. Interacts with hexon protein; this interaction allows chaperoning and trimerization of hexon proteins. Interacts (via N-terminus) with host initiation factor EIF4G (via C-terminus). Interacts (via RRM domain) with viral mRNAs that contain the tripartite leader; this interaction allows ribosome shunting and expression of viral late mRNAs. Post-translationally, might be cleaved by the viral protease. Phosphorylated. Tyrosine phosphorylation enhances preferential binding to tripartite leader mRNAs and allows ribosome shunting. In terms of processing, methylated. Asymmetric dimethylation by host PRMT1 of the Arg/Gly-rich region may regulate shutoff protein binding to hexon and promote the capsid assembly in the nucleus.

The protein resides in the host cytoplasm. Functionally, protein that inhibits host translation while promoting late viral translation by ribosome shunting. Blocks host cap-dependent translation by binding to eIF4G, displacing MKNK1 from cap initiation complexes and preventing EIF4E phosphorylation. Binds to the tripartite leader sequence of viral late mRNAs and recruits host eIF4G, PABPC1/poly-A binding protein and 40S ribosomes subunits on viral mRNAs, allowing ribosome shunting and efficient translation of late viral mRNAs even though conventional translation via ribosome scanning from the cap has been shut off in the host cell. During assembly, acts as a chaperone protein that helps hexon proteins assembly into trimers. The sequence is that of Shutoff protein from Homo sapiens (Human).